Here is a 177-residue protein sequence, read N- to C-terminus: Large ribosomal subunit protein uL6 (177 aa).

The protein belongs to the universal ribosomal protein uL6 family. In terms of assembly, part of the 50S ribosomal subunit.

Its function is as follows. This protein binds to the 23S rRNA, and is important in its secondary structure. It is located near the subunit interface in the base of the L7/L12 stalk, and near the tRNA binding site of the peptidyltransferase center. In Natronomonas pharaonis (strain ATCC 35678 / DSM 2160 / CIP 103997 / JCM 8858 / NBRC 14720 / NCIMB 2260 / Gabara) (Halobacterium pharaonis), this protein is Large ribosomal subunit protein uL6.